We begin with the raw amino-acid sequence, 3966 residues long: MAHSCRWRFPARPGTTGGGGGGGRRGLGGAPRQRVPALLLPPGPQAGGGGPGAPPSPPAVAAAAAGSSGAGVPGGAAAASAASSSSASSSSSSSSSASSGPALLRVGPGFDAALQVSAAIGTNLRRFRAVFGESGGGGGSGEDEQFLGFGSDEEVRVRSPTRSPSVKASPRKPRGRPRSGSDRNPAILSDPSVFSPLNKSETKSADKIKKKDSKSIEKKRGRPPTFPGVKIKITHGKDIAELTQGSKEDSLKKVKRTPSAMFQQATKIKKLRAGKLSPLKSKFKTGKLQIGRKGVQIVRRRGRPPSTERIKTPSGLLINSELEKPQKVRKDKEGTPPLTKEDKTVVRQSPRRIKPVRIIPSCKRTDATIAKQLLQRAKKGAQKKIEKEAAQLQGRKVKTQVKNIRQFIMPVVSAISSRIIKTPRRFIEDEDYDPPMKIARLESTPNSRFSATSCGSSEKSSAASQHSSQMSSDSSRSSSPSIDTTSDSQASEEIQALPEERSNTPEVHTPLPISQSPENESNDRRSRRYSMSERSFGSRATKKLPTLQSAPQQQTSSSPPPPLLTPPPPLQPASGISDHTPWLMPPTIPLASPFLPASAAPMQGKRKSILREPTFRWTSLKHSRSEPQYFSSAKYAKEGLIRKPIFDNFRPPPLTPEDVGFASGFSASGTAASARLFSPLHSGTRFDIHKRSPILRAPRFTPSEAHSRIFESVTLPSNRTSSGASSSGVSNRKRKRKVFSPIRSEPRSPSHSMRTRSGRLSTSELSPLTPPSSVSSSLSIPVSPLAASALNPTFTFPSHSLTQSGESTEKNQRARKQTSALAEPFSSNSPALFPWFTPGSQTEKGRKKDTAPEELSKDRDADKSVEKDKSRERDREREKENKRESRKEKRKKGSDIQSSSALYPVGRVSKEKVAGEDVGTSSSAKKATGRKKSSSLDSGADVAPVTLGDTTAVKAKILIKKGRGNLEKNNLDLGPAAPSLEKERTPCLSAPSSSTVKHSTSSIGSMLAQADKLPMTDKRVASLLKKAKAQLCKIEKSKSLKQTDQPKAQGQESDSSETSVRGPRIKHVCRRAAVALGRKRAVFPDDMPTLSALPWEEREKILSSMGNDDKSSVAGSEDAEPLAPPIKPIKPVTRNKAPQEPPVKKGRRSRRCGQCPGCQVPEDCGICTNCLDKPKFGGRNIKKQCCKMRKCQNLQWMPSKASLQKQTKAVKKKEKKSKTTEKKESKESTAVKSPLEPAQKAAPPPREEPAPKKSSSEPPPRKPVEEKSEEGGAPAPAPAPEPKQVSAPASRKSSKQVSQPAAVVPPQPPSTAPQKKEAPKAVPSEPKKKQPPPPEPGPEQSKQKKVAPRPSIPVKQKPKDKEKPPPVSKQENAGTLNILNPLSNGISSKQKIPADGVHRIRVDFKEDCEAENVWEMGGLGILTSVPITPRVVCFLCASSGHVEFVYCQVCCEPFHKFCLEENERPLEDQLENWCCRRCKFCHVCGRQHQATKQLLECNKCRNSYHPECLGPNYPTKPTKKKKVWICTKCVRCKSCGSTTPGKGWDAQWSHDFSLCHDCAKLFAKGNFCPLCDKCYDDDDYESKMMQCGKCDRWVHSKCESLSGTEDEMYEILSNLPESVAYTCVNCTERHPAEWRLALEKELQASLKQVLTALLNSRTTSHLLRYRQAAKPPDLNPETEESIPSRSSPEGPDPPVLTEVSKQDEQQPLDLEGVKKRMDQGSYVSVLEFSDDIVKIIQAAINSDGGQPEIKKANSMVKSFFIRQMERVFPWFSVKKSRFWEPNKVSNNSGMLPNAVLPPSLDHNYAQWQEREESSHTEQPPLMKKIIPAPKPKGPGEPDSPTPLHPPTPPILSTDRSREDSPELNPPPGIDDNRQCALCLMYGDDSANDAGRLLYIGQNEWTHVNCALWSAEVFEDDDGSLKNVHMAVIRGKQLRCEFCQKPGATVGCCLTSCTSNYHFMCSRAKNCVFLDDKKVYCQRHRDLIKGEVVPENGFEVFRRVFVDFEGISLRRKFLNGLEPENIHMMIGSMTIDCLGILNDLSDCEDKLFPIGYQCSRVYWSTTDARKRCVYTCKIMECRPPVVEPDINSTVEHDDNRTIAHSPSSFIDASCKDSQSTAAILSPPSPDRPHSQTSGSCYYHVISKVPRIRTPSYSPTQRSPGCRPLPSAGSPTPTTHEIVTVGDPLLSSGLRSIGSRRHSTSSLSPLRSKLRIMSPVRTGSAYSRSSVSSVPSLGTATDPEASAKASDRGGLLSSSANLGHSAPPSSSSQRTVGGSKTSHLDGSSPSEVKRCSASDLVPKGSLVKGEKNRTSSSKSTDGSAHSTAYPGIPKLTPQVHNATPGELNISKIGSFAEPSTVPFSSKDTVSYPQLHLRGQRSDRDQHMDPSQSVKPSPNEDGEIKTLKLPGMGHRPSILHEHIGSSSRDRRQKGKKSSKETCKEKHSSKSYLEPGQVTTGEEGNLKPEFADEVLTPGFLGQRPCNNVSSEKIGDKVLPLSGVPKGQSTQVEGSSKELQAPRKCSVKVTPLKMEGENQSKNTQKESGPGSPAHIESVCPAEPVSASRSPGAGPGVQPSPNNTLSQDPQSNNYQNLPEQDRNLMIPDGPKPQEDGSFKRRYPRRSARARSNMFFGLTPLYGVRSYGEEDIPFYSNSTGKKRGKRSAEGQVDGADDLSTSDEDDLYYYNFTRTVISSGGEERLASHNLFREEEQCDLPKISQLDGVDDGTESDTSVTATSRKSSQIPKRNGKENGTENLKIDRPEDAGEKEHVIKSAVGHKNEPKLDNCHSVSRVKAQGQDSLEAQLSSLESSRRVHTSTPSDKNLLDTYNAELLKSDSDNNNSDDCGNILPSDIMDFVLKNTPSMQALGESPESSSSELLTLGEGLGLDSNREKDIGLFEVFSQQLPATEPVDSSVSSSISAEEQFELPLELPSDLSVLTTRSPTVPSQNPSRLAVISDSGEKRVTITEKSVASSEGDPALLSPGVDPAPEGHMTPDHFIQGHMDADHISSPPCGSVEQGHGNSQDLTRNSGTPGLQVPVSPTVPVQNQKYVPSSTDSPGPSQISNAAVQTTPPHLKPATEKLIVVNQNMQPLYVLQTLPNGVTQKIQLTSPVSSTPSVMETNTSVLGPMGSGLTLTTGLNPSLPPSPSLFPPASKGLLSVPHHQHLHSFPAAAQSSFPPNISSPPSGLLIGVQPPPDPQLLGSEANQRTDLTTTVATPSSGLKKRPISRLHTRKNKKLAPSSAPSNIAPSDVVSNMTLINFTPSQLSNHPSLLDLGSLNPSSHRTVPNIIKRSKSGIMYFEQAPLLPPQSVGGTAATAAGSSTISQDTSHLTSGPVSALASGSSVLNVVSMQTTAAPTSSTSVPGHVTLANQRLLGTPDIGSISHLLIKASHQSLGIQDQPVALPPSSGMFPQLGTSQTPSAAAMTAASSICVLPSSQTAGMTAASPPGEAEEHYKLQRGNQLLAGKTGTLTSQRDRDPDSAPGTQPSNFTQTAEAPNGVRLEQNKTLPSAKPASSASPGSSPSSGQQSGSSSVPGPTKPKPKAKRIQLPLDKGSGKKHKVSHLRTSSEAHIPHRDTDPAPQPSVTRTPRANREQQDAAGVEQPSQKECGQPAGPVAALPEVQATQNPANEQENAEPKAMEEEESGFSSPLMLWLQQEQKRKESITERKPKKGLVFEISSDDGFQICAESIEDAWKSLTDKVQEARSNARLKQLSFAGVNGLRMLGILHDAVVFLIEQLAGAKHCRNYKFRFHKPEEANEPPLNPHGSARAEVHLRQSAFDMFNFLASKHRQPPEYNPNDEEEEEVQLKSARRATSMDLPMPMRFRHLKKTSKEAVGVYRSPIHGRGLFCKRNIDAGEMVIEYAGNVIRSIQTDKREKYYDSKGIGCYMFRIDDSEVVDATMHGNAARFINHSCEPNCYSRVINIDGQKHIVIFAMRKIYRGEELTYDYKFPIEDASNKLPCNCGAKKCRKFLN.

Disordered regions lie at residues 1–106 (MAHS…LLRV) and 130–231 (VFGE…GVKI). Residues 6–25 (RWRFPARPGTTGGGGGGGRR) carry the Menin-binding motif (MBM) motif. Residues 15–29 (TTGGGGGGGRRGLGG) are compositionally biased toward gly residues. The span at 75-102 (GAAAASAASSSSASSSSSSSSSASSGPA) shows a compositional bias: low complexity. The Integrase domain-binding motif 1 (IBM1) motif lies at 121-132 (GTNLRRFRAVFG). Phosphoserine; by CK2 occurs at positions 134 and 140. Residues 145–150 (QFLGFG) carry the Integrase domain-binding motif 2 (IBM2) motif. A Phosphoserine modification is found at Ser-151. Residues 167 to 178 (KASPRKPRGRPR) constitute a DNA-binding region (a.T hook 1). A Phosphoserine modification is found at Ser-195. A compositionally biased stretch (basic and acidic residues) spans 200–218 (SETKSADKIKKKDSKSIEK). Positions 215 to 225 (SIEKKRGRPPT) form a DNA-binding region, a.T hook 2. Lys-237 carries the post-translational modification N6-acetyllysine. The segment at residues 299–307 (RRRGRPPST) is a DNA-binding region (a.T hook 3). The disordered stretch occupies residues 322–343 (LEKPQKVRKDKEGTPPLTKEDK). Lys-371 is modified (N6-acetyllysine). The disordered stretch occupies residues 440–590 (RLESTPNSRF…PWLMPPTIPL (151 aa)). Residues 450–489 (SATSCGSSEKSSAASQHSSQMSSDSSRSSSPSIDTTSDSQ) show a composition bias toward low complexity. The residue at position 516 (Ser-516) is a Phosphoserine. Low complexity predominate over residues 544–557 (LPTLQSAPQQQTSS). The span at 558-571 (SPPPPLLTPPPPLQ) shows a compositional bias: pro residues. Lys-634 bears the N6-acetyllysine mark. A Phosphoserine modification is found at Ser-678. 4 disordered regions span residues 711–943 (ESVT…ADVA), 963–1003 (RGNL…TSSI), 1034–1064 (IEKS…RGPR), and 1101–1161 (ILSS…CQVP). Low complexity-rich tracts occupy residues 717–730 (SNRT…SGVS) and 760–790 (LSTS…ASAL). Polar residues-rich tracts occupy residues 791–806 (NPTF…QSGE) and 817–830 (QTSA…SNSP). Thr-837 carries the phosphothreonine modification. Residues 843–887 (EKGRKKDTAPEELSKDRDADKSVEKDKSRERDREREKENKRESRK) show a composition bias toward basic and acidic residues. Ser-923 bears the Phosphoserine mark. The segment covering 989 to 1003 (SAPSSSTVKHSTSSI) has biased composition (low complexity). The segment covering 1040–1059 (LKQTDQPKAQGQESDSSETS) has biased composition (polar residues). At Ser-1053 the chain carries Phosphoserine. Residues 1101 to 1111 (ILSSMGNDDKS) show a composition bias toward basic and acidic residues. Position 1127 is an N6-acetyllysine (Lys-1127). The CXXC-type zinc-finger motif lies at 1144 to 1192 (KKGRRSRRCGQCPGCQVPEDCGICTNCLDKPKFGGRNIKKQCCKMRKCQ). Residues Cys-1152, Cys-1155, Cys-1158, Cys-1164, Cys-1167, Cys-1170, Cys-1186, and Cys-1191 each coordinate Zn(2+). The interval 1196-1390 (WMPSKASLQK…PLSNGISSKQ (195 aa)) is disordered. The span at 1217-1229 (SKTTEKKESKEST) shows a compositional bias: basic and acidic residues. A compositionally biased stretch (low complexity) spans 1230 to 1241 (AVKSPLEPAQKA). An N6-acetyllysine modification is found at Lys-1232. Residues 1245 to 1270 (PREEPAPKKSSSEPPPRKPVEEKSEE) show a composition bias toward basic and acidic residues. Positions 1369 to 1390 (KQENAGTLNILNPLSNGISSKQ) are enriched in polar residues. 3 consecutive PHD-type zinc fingers follow at residues 1430–1481 (RVVC…CKFC), 1478–1532 (CKFC…CVRC), and 1565–1629 (GNFC…CTER). The tract at residues 1583–1599 (KMMQCGKCDRWVHSKCE) is interaction with histone H3K4me3. The 131-residue stretch at 1637–1767 (ALEKELQASL…SFFIRQMERV (131 aa)) folds into the Bromo domain. Disordered regions lie at residues 1665-1714 (YRQA…EGVK) and 1807-1870 (WQER…PGID). The span at 1828-1849 (APKPKGPGEPDSPTPLHPPTPP) shows a compositional bias: pro residues. A Phosphoserine modification is found at Ser-1839. Thr-1847 carries the phosphothreonine modification. Ser-1860 bears the Phosphoserine mark. The segment at 1872–1912 (NRQCALCLMYGDDSANDAGRLLYIGQNEWTHVNCALWSAEV) adopts a C2HC pre-PHD-type zinc-finger fold. The PHD-type 4 zinc-finger motif lies at 1933–1980 (LRCEFCQKPGATVGCCLTSCTSNYHFMCSRAKNCVFLDDKKVYCQRHR). The FYR N-terminal domain maps to 2020–2076 (NIHMMIGSMTIDCLGILNDLSDCEDKLFPIGYQCSRVYWSTTDARKRCVYTCKIMEC). Ser-2100 is modified (phosphoserine). The segment at 2147 to 2174 (RTPSYSPTQRSPGCRPLPSAGSPTPTTH) is disordered. The residue at position 2148 (Thr-2148) is a Phosphothreonine. A phosphoserine mark is found at Ser-2152 and Ser-2202. Disordered stretches follow at residues 2214–2339 (VRTG…ATPG), 2371–2619 (RGQR…SARA), 2639–2673 (EDIP…SDED), and 2709–2759 (KISQ…DAGE). The segment covering 2218-2230 (SAYSRSSVSSVPS) has biased composition (low complexity). 2 stretches are compositionally biased toward polar residues: residues 2250–2284 (LSSS…SSPS) and 2308–2320 (TSSS…SAHS). Composition is skewed to basic and acidic residues over residues 2411-2422 (ILHEHIGSSSRD) and 2430-2440 (SSKETCKEKHS). Residues 2498–2509 (GQSTQVEGSSKE) are compositionally biased toward polar residues. A Glycyl lysine isopeptide (Lys-Gly) (interchain with G-Cter in SUMO2) cross-link involves residue Lys-2524. The segment covering 2528 to 2537 (ENQSKNTQKE) has biased composition (polar residues). Position 2560 is a phosphoserine (Ser-2560). Over residues 2569 to 2588 (PSPNNTLSQDPQSNNYQNLP) the composition is skewed to polar residues. The residue at position 2607 (Ser-2607) is a Phosphoserine. Residues 2609–2618 (KRRYPRRSAR) are compositionally biased toward basic residues. The span at 2663–2673 (GADDLSTSDED) shows a compositional bias: acidic residues. Positions 2722 to 2737 (SDTSVTATSRKSSQIP) are enriched in polar residues. The span at 2740-2759 (NGKENGTENLKIDRPEDAGE) shows a compositional bias: basic and acidic residues. The residue at position 2792 (Ser-2792) is a Phosphoserine. Positions 2843–2851 (SDIMDFVLK) match the 9aaTAD motif. Ser-2951 bears the Phosphoserine mark. The residue at position 2954 (Lys-2954) is an N6-acetyllysine. Disordered stretches follow at residues 2958–3060 (ITEK…NAAV) and 3164–3239 (AAQS…PSNI). Over residues 3012-3025 (HGNSQDLTRNSGTP) the composition is skewed to polar residues. Ser-3032 carries the post-translational modification Phosphoserine. Positions 3035–3060 (VPVQNQKYVPSSTDSPGPSQISNAAV) are enriched in polar residues. Positions 3167-3178 (SSFPPNISSPPS) are enriched in low complexity. Over residues 3196-3212 (EANQRTDLTTTVATPSS) the composition is skewed to polar residues. Basic residues predominate over residues 3214 to 3229 (LKKRPISRLHTRKNKK). At Thr-3369 the chain carries Phosphothreonine. An N6-acetyllysine modification is found at Lys-3459. The disordered stretch occupies residues 3462–3640 (TLTSQRDRDP…AMEEEESGFS (179 aa)). Over residues 3475–3487 (PGTQPSNFTQTAE) the composition is skewed to polar residues. Residues 3501 to 3528 (PSAKPASSASPGSSPSSGQQSGSSSVPG) show a composition bias toward low complexity. Phosphoserine occurs at positions 3510 and 3523. Basic and acidic residues predominate over residues 3558 to 3570 (TSSEAHIPHRDTD). Residues 3663–3744 (KKGLVFEISS…KHCRNYKFRF (82 aa)) enclose the FYR C-terminal domain. The WDR5 interaction motif (WIN) motif lies at 3759 to 3764 (GSARAE). A disordered region spans residues 3782–3805 (HRQPPEYNPNDEEEEEVQLKSARR). In terms of domain architecture, SET spans 3826-3942 (EAVGVYRSPI…RGEELTYDYK (117 aa)). Positions 3836 and 3838 each coordinate S-adenosyl-L-methionine. Cys-3879 is subject to S-methylcysteine; by autocatalysis. S-adenosyl-L-methionine is bound by residues Tyr-3880 and 3903-3904 (NH). The Zn(2+) site is built by Cys-3906 and Cys-3954. In terms of domain architecture, Post-SET spans 3950 to 3966 (NKLPCNCGAKKCRKFLN). Asn-3955 provides a ligand contact to S-adenosyl-L-methionine. 2 residues coordinate Zn(2+): Cys-3956 and Cys-3961.

Belongs to the class V-like SAM-binding methyltransferase superfamily. Histone-lysine methyltransferase family. TRX/MLL subfamily. In terms of assembly, MLL cleavage product N320 heterodimerizes with MLL cleavage product C180 (via SET and FYRC domains). Component of some MLL1/MLL complex, at least composed of the core components KMT2A/MLL1, ASH2L, HCFC1/HCF1, HCFC2, WDR5, DPY30 and RBBP5, as well as the facultative components BACC1, CHD8, E2F6, HSP70, INO80C, KANSL1, LAS1L, MAX, MCRS1, MEN1, MGA, KAT8/MOF, PELP1, PHF20, PRP31, RING2, RUVB1/TIP49A, RUVB2/TIP49B, SENP3, TAF1, TAF4, TAF6, TAF7, TAF9 and TEX10. Interacts (via WIN motif) with WDR5; the interaction is direct. Interaction with WDR5 is required for stable interaction with ASH2L and RBBP5, and thereby also for optimal histone methyltransferase activity. Interacts with KAT8/MOF; the interaction is direct. Interacts with SBF1 and PPP1R15A. Interacts with ZNF335. Interacts with CLOCK and BMAL1 in a circadian manner. Interacts with PPIE; this results in decreased histone H3 methyltransferase activity. Interacts with CREBBP. Interacts with the WRAD complex composed of WDR5, RBBP5, ASH2L and DPY30. Interacts (via MBM motif) with MEN1. Interacts (via IBM motifs) with PSIP1 (via IBD domain) with moderate affinity whereas the KMT2A-MEN1 complex interacts with a greater affinity; MEN1 enhances interaction of KMT2A with PSIP1. Phosphorylation increases its affinity for PSIP1. Forms a complex with CREBBP and CREB1. Post-translationally, proteolytic cleavage by TASP1 generates MLL cleavage 3product N320 and MLL cleavage product C180, which reassemble through a non-covalent association. 2 cleavage sites exist, cleavage site 1 (CS1) and cleavage site 2 (CS2), to generate MLL cleavage products N320 and C180. CS2 is the major site. Phosphorylation increases its interaction with PSIP1. In terms of processing, auto-methylated at Cys-3879: auto-methylation is inhibited by the WRAD complex and unmodified histone H3.

Its subcellular location is the nucleus. It carries out the reaction L-lysyl(4)-[histone H3] + S-adenosyl-L-methionine = N(6)-methyl-L-lysyl(4)-[histone H3] + S-adenosyl-L-homocysteine + H(+). The enzyme catalyses N(6)-methyl-L-lysyl(4)-[histone H3] + S-adenosyl-L-methionine = N(6),N(6)-dimethyl-L-lysyl(4)-[histone H3] + S-adenosyl-L-homocysteine + H(+). It catalyses the reaction L-cysteinyl-[protein] + S-adenosyl-L-methionine = S-methyl-L-cysteinyl-[protein] + S-adenosyl-L-homocysteine + H(+). Its function is as follows. Histone methyltransferase that plays an essential role in early development and hematopoiesis. Catalytic subunit of the MLL1/MLL complex, a multiprotein complex that mediates both methylation of 'Lys-4' of histone H3 (H3K4me) complex and acetylation of 'Lys-16' of histone H4 (H4K16ac). Catalyzes methyl group transfer from S-adenosyl-L-methionine to the epsilon-amino group of 'Lys-4' of histone H3 (H3K4) via a non-processive mechanism. Part of chromatin remodeling machinery predominantly forms H3K4me1 and H3K4me2 methylation marks at active chromatin sites where transcription and DNA repair take place. Has weak methyltransferase activity by itself, and requires other component of the MLL1/MLL complex to obtain full methyltransferase activity. Has no activity toward histone H3 phosphorylated on 'Thr-3', less activity toward H3 dimethylated on 'Arg-8' or 'Lys-9', while it has higher activity toward H3 acetylated on 'Lys-9'. Binds to unmethylated CpG elements in the promoter of target genes and helps maintain them in the nonmethylated state. Required for transcriptional activation of HOXA9. Promotes PPP1R15A-induced apoptosis. Plays a critical role in the control of circadian gene expression and is essential for the transcriptional activation mediated by the CLOCK-BMAL1 heterodimer. Establishes a permissive chromatin state for circadian transcription by mediating a rhythmic methylation of 'Lys-4' of histone H3 (H3K4me) and this histone modification directs the circadian acetylation at H3K9 and H3K14 allowing the recruitment of CLOCK-BMAL1 to chromatin. Also has auto-methylation activity on Cys-3879 in absence of histone H3 substrate. The chain is Histone-lysine N-methyltransferase 2A (Kmt2a) from Mus musculus (Mouse).